A 540-amino-acid polypeptide reads, in one-letter code: Zona pellucida sperm-binding protein 4 (540 aa).

Residues 1–18 (MWLLRCVLLCVSLSLAVS) form the signal peptide. The Extracellular segment spans residues 19–505 (GQHKPEAPDY…EKLRVPVDSK (487 aa)). N69 carries an N-linked (GlcNAc...) asparagine glycan. Residues 141–183 (DWCDSIPARDRLPCAPSPISRGDCEGLGCCYSSEEVNSCYYGN) form the P-type domain. A ZP domain is found at 188-466 (HCTREGHFSI…VTCPDLSRRR (279 aa)). N202, N219, and N267 each carry an N-linked (GlcNAc...) asparagine glycan. T302 is a glycosylation site (O-linked (GalNAc...) threonine). Cysteines 367 and 442 form a disulfide. A propeptide spans 463–540 (SRRRNFDNSS…QKSCPDQMCQ (78 aa)) (removed in mature form). N470 and N474 each carry an N-linked (GlcNAc...) asparagine glycan. Residues 506-526 (VLWVAGLSGTLILGALLVSYL) form a helical membrane-spanning segment. Residues 527–540 (AVKKQKSCPDQMCQ) are Cytoplasmic-facing.

It belongs to the ZP domain family. ZPB subfamily. Post-translationally, proteolytically cleaved before the transmembrane segment to yield the secreted ectodomain incorporated in the zona pellucida. In terms of tissue distribution, expressed in oocytes.

The protein localises to the zona pellucida. The protein resides in the cell membrane. Its function is as follows. Component of the zona pellucida, an extracellular matrix surrounding oocytes which mediates sperm binding, induction of the acrosome reaction and prevents post-fertilization polyspermy. The zona pellucida is composed of 3 to 4 glycoproteins, ZP1, ZP2, ZP3, and ZP4. ZP4 may act as a sperm receptor. The polypeptide is Zona pellucida sperm-binding protein 4 (ZP4) (Homo sapiens (Human)).